A 601-amino-acid polypeptide reads, in one-letter code: Nuclear receptor subfamily 2 group C member 1 (601 aa).

The segment at Met-1–Met-179 is required for interaction with KAT2B. The segment at residues Phe-111–Cys-186 is a DNA-binding region (nuclear receptor). NR C4-type zinc fingers lie at residues Cys-114–Cys-134 and Cys-150–Cys-169. A phosphoserine mark is found at Ser-198 and Ser-216. Thr-221 carries the post-translational modification Phosphothreonine. Phosphothreonine; by MAPK1 is present on Thr-223. Lys-251 is covalently cross-linked (Glycyl lysine isopeptide (Lys-Gly) (interchain with G-Cter in SUMO); alternate). Lys-251 participates in a covalent cross-link: Glycyl lysine isopeptide (Lys-Gly) (interchain with G-Cter in SUMO2); alternate. An NR LBD domain is found at Gly-349–Glu-591. A Phosphoserine; by PKC modification is found at Ser-582. Residues Pro-585 to Leu-601 are required for interaction with NRIP1. Lys-589 participates in a covalent cross-link: Glycyl lysine isopeptide (Lys-Gly) (interchain with G-Cter in SUMO2).

The protein belongs to the nuclear hormone receptor family. NR2 subfamily. In terms of assembly, homodimer. Heterodimer; with NR2C2 which is required for chromatin remodeling and for binding to promoter regions such as globin DR1 repeats. Interacts with ESR1; the interaction prevents homodimerization of ESR1 and suppresses its transcriptional activity and cell growth. Interacts with NRIP1 (via its LXXLL motifs); the interaction provides corepressor activity. Interacts with HDAC3 (via the DNA-binding domain); the interaction recruits phosphorylated NR2C1 to PML bodies for sumoylation. Interacts with HDAC4 (via the DNA-binding domain). Interacts with PIAS1; the interaction is required for sumoylation of NR2C1. Interacts with UBE2I; the interaction is required for sumoylation of NR2C1. Interacts with KAT2B; the interaction acts as a corepressor of gene expression. In terms of processing, sumoylation requires both PIAS1 and UBE2I. Sumoylation appears to dissociate NR2C1 from the PML nuclear bodies. Enhances the interaction with NRIP1 but inhibits interaction with KAT2B. In proliferating cells, stimulation by all-trans retinoic acid, activation of MAPK1-mediated phosphorylation and recruitment to PML bodies with subsequent sumoylation, suppresses OCT4 expression. Post-translationally, phosphorylated on several serine and threonine residues. Phosphorylation on Thr-223, stimulated by all-trans retinoic acid (atRA) mediates PML location and sumoylation in proliferating cells which then modulates its association with effector molecules, KAT2B and NRIP1. Phosphorylation on Ser-582 by PKC is important for protein stability and function as activator of RARB.

Its subcellular location is the nucleus. The protein resides in the PML body. Functionally, orphan nuclear receptor. Binds the IR7 element in the promoter of its own gene in an autoregulatory negative feedback mechanism. Primarily repressor of a broad range of genes including ESR1 and RARB. Together with NR2C2, forms the core of the DRED (direct repeat erythroid-definitive) complex that represses embryonic and fetal globin transcription. Binds to hormone response elements (HREs) consisting of two 5'-AGGTCA-3' half site direct repeat consensus sequences. Also activator of OCT4 gene expression. Plays a fundamental role in early embryogenesis and regulates embryonic stem cell proliferation and differentiation. Mediator of retinoic acid-regulated preadipocyte proliferation. The chain is Nuclear receptor subfamily 2 group C member 1 (NR2C1) from Pongo abelii (Sumatran orangutan).